A 249-amino-acid polypeptide reads, in one-letter code: Uridylate kinase (249 aa).

Residue 21–24 (KLSG) participates in ATP binding. Glycine 63 lines the UMP pocket. Glycine 64 and arginine 68 together coordinate ATP. UMP-binding positions include aspartate 84 and 145–152 (TGNPFVTT). Residues threonine 172, tyrosine 178, and aspartate 181 each contribute to the ATP site.

The protein belongs to the UMP kinase family. As to quaternary structure, homohexamer.

Its subcellular location is the cytoplasm. The enzyme catalyses UMP + ATP = UDP + ADP. The protein operates within pyrimidine metabolism; CTP biosynthesis via de novo pathway; UDP from UMP (UMPK route): step 1/1. Its activity is regulated as follows. Inhibited by UTP. Its function is as follows. Catalyzes the reversible phosphorylation of UMP to UDP. This Francisella tularensis subsp. holarctica (strain FTNF002-00 / FTA) protein is Uridylate kinase.